The chain runs to 2316 residues: Receptor-type tyrosine-protein phosphatase zeta (2316 aa).

The first 24 residues, 1–24 (MRILQSFLACVQLLCVCRLDWAYG), serve as a signal peptide directing secretion. Residues 25-1637 (YYRQQRKLVE…LAEGLESEKK (1613 aa)) are Extracellular-facing. The 265-residue stretch at 36 to 300 (IGWSYTGALN…KFSRQVFSSY (265 aa)) folds into the Alpha-carbonic anhydrase domain. 2 disulfide bridges follow: Cys-56–Cys-240 and Cys-133–Cys-264. Asn-105, Asn-134, Asn-223, Asn-232, Asn-324, Asn-381, and Asn-497 each carry an N-linked (GlcNAc...) asparagine glycan. The Fibronectin type-III domain occupies 314–413 (EPENVQADPE…LIVDMPTEDA (100 aa)). Disordered stretches follow at residues 433–499 (YGKG…LNTS) and 518–537 (LPSQ…TSAS). N-linked (GlcNAc...) asparagine glycosylation is present at Asn-552. Ser-572 and Ser-576 each carry phosphoserine. 2 disordered regions span residues 586-624 (KLDS…TPEA) and 636-720 (RNAL…EMPH). The segment covering 592 to 602 (DDSSGSSPASS) has biased composition (low complexity). O-linked (Xyl...) (chondroitin sulfate) serine glycosylation occurs at Ser-595. The segment covering 603–621 (TVPFSTDNLSHGYTSSSDT) has biased composition (polar residues). The N-linked (GlcNAc...) asparagine glycan is linked to Asn-610. Ser-645 carries the phosphoserine; alternate modification. A glycan (O-linked (Xyl...) (chondroitin sulfate) serine; alternate) is linked at Ser-645. Ser-647 is modified (phosphoserine). The span at 666–675 (TDLTTQSETG) shows a compositional bias: polar residues. N-linked (GlcNAc...) asparagine glycosylation occurs at Asn-685. A compositionally biased stretch (polar residues) spans 699–711 (ETFSPDATASRGP). The N-linked (GlcNAc...) asparagine glycan is linked to Asn-786. Ser-1005 carries an O-linked (Xyl...) (chondroitin sulfate) serine glycan. Residues Asn-1025 and Asn-1058 are each glycosylated (N-linked (GlcNAc...) asparagine). 4 disordered regions span residues 1141–1172 (QASG…SHPS), 1204–1228 (KTAL…SSSS), 1401–1521 (LLPS…DGRE), and 1545–1622 (TSDE…NSSH). Over residues 1152 to 1172 (LSTNSEPALSDTASSEVSHPS) the composition is skewed to polar residues. A compositionally biased stretch (polar residues) spans 1401 to 1413 (LLPSKATSKPTHS). The segment covering 1425 to 1439 (EDGDDYDDDDYDDID) has biased composition (acidic residues). Residue Asn-1463 is glycosylated (N-linked (GlcNAc...) asparagine). Residues 1464–1478 (DSDTQESSLVDQSDP) are compositionally biased toward polar residues. Residues Ser-1550 and Ser-1552 are each glycosylated (O-linked (Xyl...) (chondroitin sulfate) serine). 2 stretches are compositionally biased toward polar residues: residues 1555-1569 (GTSD…STDF) and 1595-1609 (PRSS…HSGV). Asn-1563 carries an N-linked (GlcNAc...) asparagine glycan. Low complexity predominate over residues 1610 to 1621 (SNSSEAEASNSS). Asn-1611 and Asn-1619 each carry an N-linked (GlcNAc...) asparagine glycan. Residues 1638–1663 (AVIPLVIVSALTFICLVVLVGILIYW) traverse the membrane as a helical segment. Topologically, residues 1664 to 2316 (RKCFQTAHFY…NIAESLESLV (653 aa)) are cytoplasmic. A phosphothreonine mark is found at Thr-1685 and Thr-1688. Tyrosine-protein phosphatase domains follow at residues 1718–1993 (FTEE…LVEA) and 2024–2283 (LEKQ…VLSL). Substrate is bound by residues Asp-1902, 1934–1940 (CSAGVGR), and Gln-1978. Cys-1934 (phosphocysteine intermediate) is an active-site residue. Phosphoserine is present on Ser-2056.

It belongs to the protein-tyrosine phosphatase family. Receptor class 5 subfamily. In terms of assembly, interacts with tenascin. Interacts with N-CAM and NG-CAM. The carbonic-anhydrase like domain interacts with CNTN1 (contactin). Interacts with PTN. Interaction with PTN promotes formation of homooligomers; oligomerization impairs phosphatase activity. Interacts (via chondroitin sulfate chains) with MDK (via C-terminal); this interaction is inhibited by PTN; this interaction promotes neuronal migration. Nervous tissue specific.

Its subcellular location is the cell membrane. It is found in the secreted. It catalyses the reaction O-phospho-L-tyrosyl-[protein] + H2O = L-tyrosyl-[protein] + phosphate. In terms of biological role, protein tyrosine phosphatase that negatively regulates oligodendrocyte precursor proliferation in the embryonic spinal cord. Required for normal differentiation of the precursor cells into mature, fully myelinating oligodendrocytes. May play a role in protecting oligondendrocytes against apoptosis. May play a role in the establishment of contextual memory, probably via the dephosphorylation of proteins that are part of important signaling cascades. Functionally, isoform 3 (phosphacan), previously designated 3F8 chondroitin sulfate proteoglycan or 3H1 keratan sulfate proteoglycan depending on the glycosylation status, is a soluble nervous tissue-specific proteoglycan. It is synthesized by glia and binds to neurons and to the neural cell adhesion molecules tenascin, N-CAM or NG-CAM but not to laminin and fibronectin. Phosphacan acts as a potent inhibitor of cell adhesion and neurite outgrowth. In Rattus norvegicus (Rat), this protein is Receptor-type tyrosine-protein phosphatase zeta (Ptprz1).